A 238-amino-acid chain; its full sequence is Large ribosomal subunit protein uL2 (238 aa).

Residues 200–238 (HGGGLHQSVSRPSTVSRNAPPGRKVGHIAARRTGRKEGK) are disordered. The segment covering 206-216 (QSVSRPSTVSR) has biased composition (polar residues). Residues 223-238 (KVGHIAARRTGRKEGK) are compositionally biased toward basic residues.

It belongs to the universal ribosomal protein uL2 family. Part of the 50S ribosomal subunit. Forms a bridge to the 30S subunit in the 70S ribosome.

In terms of biological role, one of the primary rRNA binding proteins. Required for association of the 30S and 50S subunits to form the 70S ribosome, for tRNA binding and peptide bond formation. It has been suggested to have peptidyltransferase activity; this is somewhat controversial. Makes several contacts with the 16S rRNA in the 70S ribosome. This is Large ribosomal subunit protein uL2 from Saccharolobus islandicus (strain Y.N.15.51 / Yellowstone #2) (Sulfolobus islandicus).